Consider the following 468-residue polypeptide: Chromosomal replication initiator protein DnaA (468 aa).

Residues 1-90 (MTQEKWGLLC…NSPMRPARAA (90 aa)) are domain I, interacts with DnaA modulators. Residues 91-126 (RPAAAAAAAAAAVEAPQVSAPRATDTSDVLDGLQAA) are domain II. The interval 127 to 348 (PLDPRFTFDS…GALTRLFAFA (222 aa)) is domain III, AAA+ region. ATP-binding residues include Gly171, Gly173, Lys174, and Thr175. Positions 349 to 468 (SLVGREIDME…VEMLRRALEA (120 aa)) are domain IV, binds dsDNA.

Belongs to the DnaA family. In terms of assembly, oligomerizes as a right-handed, spiral filament on DNA at oriC.

It is found in the cytoplasm. In terms of biological role, plays an essential role in the initiation and regulation of chromosomal replication. ATP-DnaA binds to the origin of replication (oriC) to initiate formation of the DNA replication initiation complex once per cell cycle. Binds the DnaA box (a 9 base pair repeat at the origin) and separates the double-stranded (ds)DNA. Forms a right-handed helical filament on oriC DNA; dsDNA binds to the exterior of the filament while single-stranded (ss)DNA is stabiized in the filament's interior. The ATP-DnaA-oriC complex binds and stabilizes one strand of the AT-rich DNA unwinding element (DUE), permitting loading of DNA polymerase. After initiation quickly degrades to an ADP-DnaA complex that is not apt for DNA replication. Binds acidic phospholipids. The protein is Chromosomal replication initiator protein DnaA of Ruegeria pomeroyi (strain ATCC 700808 / DSM 15171 / DSS-3) (Silicibacter pomeroyi).